The chain runs to 990 residues: Tyrosine-protein phosphatase 3 (990 aa).

4 disordered regions span residues 47–88 (QSQS…SPSV), 100–193 (NKIN…SNIE), 246–414 (PNQQ…SFSQ), and 431–452 (KPEM…HNDL). Low complexity-rich tracts occupy residues 52–88 (NTNT…SPSV) and 100–117 (NKIN…NNNN). Over residues 127-136 (LKLSNTMIIK) the composition is skewed to polar residues. Low complexity-rich tracts occupy residues 137 to 191 (NNNN…SNSN), 250 to 271 (SSSS…SSLL), 278 to 293 (NNST…NSSN), 310 to 327 (QAQV…QHQQ), and 334 to 413 (NLSS…TSFS). The region spanning 422–715 (MRLEFEMIKK…IFIFKVINDV (294 aa)) is the Tyrosine-protein phosphatase domain. The span at 437 to 447 (KKSHKHHQRHY) shows a compositional bias: basic residues. Residue C650 is the Phosphocysteine intermediate of the active site. The span at 786-795 (PPQQQQDNPF) shows a compositional bias: polar residues. Disordered stretches follow at residues 786–814 (PPQQ…NISI) and 834–990 (LQQQ…IKCF). 2 stretches are compositionally biased toward low complexity: residues 796-806 (SKSSIKISPSP) and 834-850 (LQQQ…DNPP). Residues 851 to 868 (LNMSSNSIKFPPVTSLSS) are compositionally biased toward polar residues. 2 stretches are compositionally biased toward low complexity: residues 878-916 (NDNN…DNNG) and 924-968 (GSFL…SDNN).

Belongs to the protein-tyrosine phosphatase family. Non-receptor class subfamily. In the anterior-like and prestalk cell types.

The protein localises to the cytoplasm. The enzyme catalyses O-phospho-L-tyrosyl-[protein] + H2O = L-tyrosyl-[protein] + phosphate. Seems to dephosphorylate a protein of 130 kDa (p130). The chain is Tyrosine-protein phosphatase 3 (ptpC) from Dictyostelium discoideum (Social amoeba).